The primary structure comprises 384 residues: Putative glutamate--cysteine ligase 2-2 (384 aa).

The protein belongs to the glutamate--cysteine ligase type 2 family. YbdK subfamily.

The enzyme catalyses L-cysteine + L-glutamate + ATP = gamma-L-glutamyl-L-cysteine + ADP + phosphate + H(+). ATP-dependent carboxylate-amine ligase which exhibits weak glutamate--cysteine ligase activity. This Rubrobacter xylanophilus (strain DSM 9941 / JCM 11954 / NBRC 16129 / PRD-1) protein is Putative glutamate--cysteine ligase 2-2.